We begin with the raw amino-acid sequence, 322 residues long: MQNRKTYAYDWIKKWMIKSISTLIIINTMVWSSVSEAYPIFAQQGYENPREATGRIVCANCHLAKKPVDIEVPQSVLPDTVFEAVVKIPYDTQVKQVLANGKKGALNVGAVLILPEGFELAPSNRVPPEMKEKIGNLYFQSYRPDKKNILVVGPVPGKKYSEIIFPILAPNPATNKDAHFLKYPIYVGGNRGRGQIYPDGSKSNNTVYNASTTGIIKKVLRKEKGGYEIIIDNTLDGRQVIDIVPPGPELIISEGESIKVDQPLTNNPNVGGFGQGDAEIVLQDVLRVQGLLLFFASVILAQIFLVLKKKQFEKVQLAEMNF.

The first 37 residues, 1–37, serve as a signal peptide directing secretion; sequence MQNRKTYAYDWIKKWMIKSISTLIIINTMVWSSVSEA. Positions 38, 58, 61, and 62 each coordinate heme. Residues 285-307 form a helical membrane-spanning segment; that stretch reads VLRVQGLLLFFASVILAQIFLVL.

This sequence belongs to the cytochrome f family. The 4 large subunits of the cytochrome b6-f complex are cytochrome b6, subunit IV (17 kDa polypeptide, petD), cytochrome f and the Rieske protein, while the 4 small subunits are PetG, PetL, PetM and PetN. The complex functions as a dimer. Heme serves as cofactor.

The protein resides in the plastid. It localises to the chloroplast thylakoid membrane. Functionally, component of the cytochrome b6-f complex, which mediates electron transfer between photosystem II (PSII) and photosystem I (PSI), cyclic electron flow around PSI, and state transitions. This is Cytochrome f (petA) from Anthoceros angustus (Hornwort).